Consider the following 150-residue polypeptide: Putative STAG3-like protein 4 (150 aa).

The protein belongs to the SCC3 family.

The chain is Putative STAG3-like protein 4 (STAG3L4) from Homo sapiens (Human).